A 69-amino-acid polypeptide reads, in one-letter code: MSSLTPLLLRSLTGPARRLMVPRAQVHSKPPREQLGVLDITIGLTSCFVCCLLPAGWVLSHLESYKKRE.

The N-terminal 25 residues, 1 to 25, are a transit peptide targeting the mitochondrion; the sequence is MSSLTPLLLRSLTGPARRLMVPRAQ. The SIFI-degron signature appears at 2–19; it reads SSLTPLLLRSLTGPARRL. Residues 26-36 are Mitochondrial matrix-facing; it reads VHSKPPREQLG. The helical transmembrane segment at 37 to 60 threads the bilayer; it reads VLDITIGLTSCFVCCLLPAGWVLS. Residues 61-69 lie on the Mitochondrial intermembrane side of the membrane; the sequence is HLESYKKRE.

The protein belongs to the cytochrome c oxidase VIII family. Component of the cytochrome c oxidase (complex IV, CIV), a multisubunit enzyme composed of 14 subunits. The complex is composed of a catalytic core of 3 subunits MT-CO1, MT-CO2 and MT-CO3, encoded in the mitochondrial DNA, and 11 supernumerary subunits COX4I, COX5A, COX5B, COX6A, COX6B, COX6C, COX7A, COX7B, COX7C, COX8 and NDUFA4, which are encoded in the nuclear genome. The complex exists as a monomer or a dimer and forms supercomplexes (SCs) in the inner mitochondrial membrane with NADH-ubiquinone oxidoreductase (complex I, CI) and ubiquinol-cytochrome c oxidoreductase (cytochrome b-c1 complex, complex III, CIII), resulting in different assemblies (supercomplex SCI(1)III(2)IV(1) and megacomplex MCI(2)III(2)IV(2)). In response to mitochondrial stress, the precursor protein is ubiquitinated by the SIFI complex in the cytoplasm before mitochondrial import, leading to its degradation. Within the SIFI complex, UBR4 initiates ubiquitin chain that are further elongated or branched by KCMF1.

It is found in the mitochondrion inner membrane. It participates in energy metabolism; oxidative phosphorylation. Component of the cytochrome c oxidase, the last enzyme in the mitochondrial electron transport chain which drives oxidative phosphorylation. The respiratory chain contains 3 multisubunit complexes succinate dehydrogenase (complex II, CII), ubiquinol-cytochrome c oxidoreductase (cytochrome b-c1 complex, complex III, CIII) and cytochrome c oxidase (complex IV, CIV), that cooperate to transfer electrons derived from NADH and succinate to molecular oxygen, creating an electrochemical gradient over the inner membrane that drives transmembrane transport and the ATP synthase. Cytochrome c oxidase is the component of the respiratory chain that catalyzes the reduction of oxygen to water. Electrons originating from reduced cytochrome c in the intermembrane space (IMS) are transferred via the dinuclear copper A center (CU(A)) of subunit 2 and heme A of subunit 1 to the active site in subunit 1, a binuclear center (BNC) formed by heme A3 and copper B (CU(B)). The BNC reduces molecular oxygen to 2 water molecules using 4 electrons from cytochrome c in the IMS and 4 protons from the mitochondrial matrix. In Rattus norvegicus (Rat), this protein is Cytochrome c oxidase subunit 8A, mitochondrial (Cox8a).